Reading from the N-terminus, the 217-residue chain is Probable GTP-binding protein EngB (217 aa).

The EngB-type G domain occupies 33-217 (GPTEIAFAGR…RAAIELAVTR (185 aa)). GTP contacts are provided by residues 41–48 (GRSNVGKS), 68–72 (GRTQE), 95–98 (DMPG), 162–165 (TKTD), and 196–198 (TSS). 2 residues coordinate Mg(2+): Ser-48 and Thr-70.

This sequence belongs to the TRAFAC class TrmE-Era-EngA-EngB-Septin-like GTPase superfamily. EngB GTPase family. The cofactor is Mg(2+).

In terms of biological role, necessary for normal cell division and for the maintenance of normal septation. This Rhizobium meliloti (strain 1021) (Ensifer meliloti) protein is Probable GTP-binding protein EngB.